The sequence spans 503 residues: Methylthioalkylmalate synthase 3, chloroplastic (503 aa).

Residues 1-51 (MASLLLTSSSMITTSCRSMVLRSGLPIGSSFPSLRLTRPYDKATLFVSCCS) constitute a chloroplast transit peptide. The region spanning 85–359 (VRVLDTTLRD…YTKIDSRQIM (275 aa)) is the Pyruvate carboxyltransferase domain.

It belongs to the alpha-IPM synthase/homocitrate synthase family. Mn(2+) serves as cofactor. As to expression, highly expressed in roots, leaves, and siliques. Lower amounts in stems and flowers.

It localises to the plastid. The protein resides in the chloroplast. It catalyses the reaction an omega-(methylsulfanyl)-2-oxoalkanoate + acetyl-CoA + H2O = a 2-(omega-methylsulfanyl)alkylmalate + CoA + H(+). Its activity is regulated as follows. Not activated by ATP. Functionally, determines the side chain length of aliphatic glucosinolate structures. Accepts all the omega-methylthio-2-oxoalkanoic acids needed to form the known C3 to C8 glucosinolates. Also able to convert pyruvate to citramalate, 2-oxoisovalerate to isopropylmalate, 4-methyl-2-oxopentanoate and 5-methyl-2-oxohexanoate for Leu-derived glucosinolates, 3-methyl-2-oxopentanoate for Ile-derived glucosinolates and phenylpyruvate to phenylethylglucosinolate. This Arabidopsis thaliana (Mouse-ear cress) protein is Methylthioalkylmalate synthase 3, chloroplastic (MAM3).